A 128-amino-acid polypeptide reads, in one-letter code: NADH-quinone oxidoreductase subunit A (128 aa).

The next 3 helical transmembrane spans lie at 12-32 (FAIF…LSFL), 66-86 (FYLI…LYAW), and 96-116 (LGFY…VYLV).

Belongs to the complex I subunit 3 family. NDH-1 is composed of 14 different subunits. Subunits NuoA, H, J, K, L, M, N constitute the membrane sector of the complex.

It localises to the cell membrane. The catalysed reaction is a quinone + NADH + 5 H(+)(in) = a quinol + NAD(+) + 4 H(+)(out). Its function is as follows. NDH-1 shuttles electrons from NADH, via FMN and iron-sulfur (Fe-S) centers, to quinones in the respiratory chain. The immediate electron acceptor for the enzyme in this species is believed to be ubiquinone. Couples the redox reaction to proton translocation (for every two electrons transferred, four hydrogen ions are translocated across the cytoplasmic membrane), and thus conserves the redox energy in a proton gradient. In Baumannia cicadellinicola subsp. Homalodisca coagulata, this protein is NADH-quinone oxidoreductase subunit A.